A 318-amino-acid polypeptide reads, in one-letter code: Cytochrome f (318 aa).

The signal sequence occupies residues 1-32 (MQNKNNYNWLKEWVIRSFLLLTLLTWPSVSNA). Heme-binding residues include Tyr-33, Cys-53, Cys-56, and His-57. Residues 284–304 (IQGLLLFFASVVLAQIFLVLK) traverse the membrane as a helical segment.

This sequence belongs to the cytochrome f family. The 4 large subunits of the cytochrome b6-f complex are cytochrome b6, subunit IV (17 kDa polypeptide, petD), cytochrome f and the Rieske protein, while the 4 small subunits are PetG, PetL, PetM and PetN. The complex functions as a dimer. Heme serves as cofactor.

It is found in the plastid. The protein resides in the chloroplast thylakoid membrane. In terms of biological role, component of the cytochrome b6-f complex, which mediates electron transfer between photosystem II (PSII) and photosystem I (PSI), cyclic electron flow around PSI, and state transitions. The polypeptide is Cytochrome f (Angiopteris evecta (Mule's foot fern)).